The sequence spans 461 residues: Autophagy-related protein 6 (461 aa).

Over residues 75–88 the composition is skewed to basic and acidic residues; it reads EEHGTDSSPDHDSS. Disordered stretches follow at residues 75–94 and 101–124; these read EEHG…ASLV and EEPV…PISG. Over residues 103–113 the composition is skewed to low complexity; it reads PVPVSAPSPES. Residues 194–286 are a coiled coil; the sequence is TKLRDSIQEC…VLNRLDHLRN (93 aa).

It belongs to the beclin family.

Functionally, required for cytoplasm to vacuole transport (Cvt) and autophagy. Also involved in endosome-to-Golgi retrograde transport. This Meyerozyma guilliermondii (strain ATCC 6260 / CBS 566 / DSM 6381 / JCM 1539 / NBRC 10279 / NRRL Y-324) (Yeast) protein is Autophagy-related protein 6 (ATG6).